The chain runs to 201 residues: Cell division protein SepF (201 aa).

Basic and acidic residues predominate over residues 27 to 38; it reads VQERTSVQRDSR. A disordered region spans residues 27-99; sequence VQERTSVQRD…PRVQNKDSVR (73 aa). Polar residues predominate over residues 43-54; the sequence is QEASQRSHMTNS. Residues 72-81 show a composition bias toward basic and acidic residues; sequence NRQERQRVQR. Residues 83 to 92 are compositionally biased toward polar residues; it reads NAYQQATPRV.

The protein belongs to the SepF family. As to quaternary structure, homodimer. Interacts with FtsZ.

The protein localises to the cytoplasm. Its function is as follows. Cell division protein that is part of the divisome complex and is recruited early to the Z-ring. Probably stimulates Z-ring formation, perhaps through the cross-linking of FtsZ protofilaments. Its function overlaps with FtsA. This Streptococcus agalactiae serotype V (strain ATCC BAA-611 / 2603 V/R) protein is Cell division protein SepF.